Consider the following 138-residue polypeptide: Small ribosomal subunit protein uS11c (138 aa).

The interval 1-22 (MAKPILRIGSRKNTRSGSRKNV) is disordered. Basic residues predominate over residues 9 to 22 (GSRKNTRSGSRKNV).

It belongs to the universal ribosomal protein uS11 family. Part of the 30S ribosomal subunit.

The protein resides in the plastid. It localises to the chloroplast. This is Small ribosomal subunit protein uS11c from Arabis hirsuta (Hairy rock-cress).